The following is a 187-amino-acid chain: PRA1 family protein G1 (187 aa).

3 helical membrane passes run L84–L104, V125–Q145, and C146–N166.

This sequence belongs to the PRA1 family. Expressed in roots and lateral roots.

The protein localises to the endosome membrane. In terms of biological role, may be involved in both secretory and endocytic intracellular trafficking in the endosomal/prevacuolar compartments. In Arabidopsis thaliana (Mouse-ear cress), this protein is PRA1 family protein G1 (PRA1G1).